The following is a 141-amino-acid chain: uncharacterized protein (141 aa).

The next 4 membrane-spanning stretches (helical) occupy residues 7 to 27 (VAIM…AASL), 47 to 67 (SAVG…MLGV), 75 to 95 (AVLC…ILMF), and 106 to 126 (VIFV…WFVA).

Its subcellular location is the cell membrane. This is an uncharacterized protein from Bacillus subtilis (strain 168).